We begin with the raw amino-acid sequence, 187 residues long: CASP-like protein 3A2 (187 aa).

Topologically, residues 1 to 24 (MTSNGEGGEVVAKRRRKGIKELVQ) are cytoplasmic. The chain crosses the membrane as a helical span at residues 25 to 45 (VALRGGCLAASATAMAVMLTA). At 46 to 71 (TEEGVADIYGFKLTLSSNWSFSPSYQ) the chain is on the extracellular side. A glycan (N-linked (GlcNAc...) asparagine) is linked at asparagine 63. A helical membrane pass occupies residues 72–92 (YVVGACAGTVLYSLLQLCLGV). At 93 to 107 (YRLVTGSPITPSRFQ) the chain is on the cytoplasmic side. Residues 108-128 (AWLCFTSDQLFCYLMMSAGSA) form a helical membrane-spanning segment. Residues 129-162 (GSGVTNLNKTGIRHTPLPDFCKTLSSFCNHVALS) lie on the Extracellular side of the membrane. N-linked (GlcNAc...) asparagine glycosylation occurs at asparagine 136. A helical transmembrane segment spans residues 163–183 (LLLVFLSFIFLASSSFFTVLV). The Cytoplasmic portion of the chain corresponds to 184 to 187 (LSTP).

Belongs to the Casparian strip membrane proteins (CASP) family. Homodimer and heterodimers.

Its subcellular location is the cell membrane. This Arabidopsis thaliana (Mouse-ear cress) protein is CASP-like protein 3A2.